The sequence spans 434 residues: AT-rich interactive domain-containing protein 5 (434 aa).

Residues 1–120 are disordered; the sequence is MMADTEMQEQ…SSPHVPEESV (120 aa). 3 stretches are compositionally biased toward basic and acidic residues: residues 25–37, 43–54, and 78–90; these read ELEKDLNSIERPK, DTTHTLDSDVHL, and RNGDVDQSEKKIT. The segment covering 92 to 102 has biased composition (polar residues); the sequence is DGGQEETTLGE. Residues 142–233 enclose the ARID domain; sequence PQDQEAFIKE…ALLEYEKHLR (92 aa). The disordered stretch occupies residues 237 to 274; it reads ELNLPGSASLPSSGIEKEASSHQASGSGRTRRDAAARA. The region spanning 336-434 is the sHSP domain; it reads AEVIDVGPPA…RLFVRVPFEQ (99 aa).

The protein belongs to the small heat shock protein (HSP20) family.

The protein localises to the nucleus. The polypeptide is AT-rich interactive domain-containing protein 5 (ARID5) (Arabidopsis thaliana (Mouse-ear cress)).